The following is a 300-amino-acid chain: Sporulation protein SPS18 (300 aa).

Positions 11–130 (ENRKRLLRAK…LANEVRSNDI (120 aa)) constitute an Arf-GAP domain. Residues 28 to 51 (CFECKSVNPQFVSCSFGIFICVNC) form a C4-type zinc finger.

The chain is Sporulation protein SPS18 (SPS18) from Saccharomyces cerevisiae (strain ATCC 204508 / S288c) (Baker's yeast).